The chain runs to 379 residues: RIB43A-like with coiled-coils protein 1 (379 aa).

The interval 1–21 is disordered; that stretch reads MYNINQSTDTKEAAAIEARRN. The span at 9 to 21 shows a compositional bias: basic and acidic residues; sequence DTKEAAAIEARRN. 3 coiled-coil regions span residues 85-111, 161-241, and 280-304; these read ADRTRRLAKKVQEFREQKQQLKNGREF, RYNL…KANL, and EQRAAIRKEQEVQRSKKEAHRQAEK.

Belongs to the RIB43A family. In terms of assembly, microtubule inner protein component of sperm flagellar doublet microtubules.

Its subcellular location is the cytoplasm. It is found in the cytoskeleton. The protein localises to the flagellum axoneme. This Macaca fascicularis (Crab-eating macaque) protein is RIB43A-like with coiled-coils protein 1 (RIBC1).